The chain runs to 561 residues: Potassium-transporting ATPase potassium-binding subunit (561 aa).

A run of 12 helical transmembrane segments spans residues 5–25 (LAAG…YVPV), 60–80 (YGYA…LYFL), 86–106 (VLPL…NTAI), 130–150 (VGLA…AIAL), 177–197 (ILLP…VIQS), 247–267 (PTPL…VCLT), 281–301 (LTLL…TLAA), 324–344 (FGIP…TGAV), 376–396 (GLYG…LLVG), 415–435 (ALSI…TVIL), 491–511 (ICML…AGAL), and 533–553 (GLLT…ALAL).

The protein belongs to the KdpA family. As to quaternary structure, the system is composed of three essential subunits: KdpA, KdpB and KdpC.

The protein resides in the cell membrane. Functionally, part of the high-affinity ATP-driven potassium transport (or Kdp) system, which catalyzes the hydrolysis of ATP coupled with the electrogenic transport of potassium into the cytoplasm. This subunit binds the extracellular potassium ions and delivers the ions to the membrane domain of KdpB through an intramembrane tunnel. The chain is Potassium-transporting ATPase potassium-binding subunit from Rhodococcus erythropolis (strain PR4 / NBRC 100887).